The primary structure comprises 780 residues: MAAPVSEPTVARQKLLALLGQVQTYVFQIELLRRCDPHIGRGNAPPTEAERASGAGAAASSEAGPGGPAGAFLTPLSVTLELLLEYAWREGERLLGSLETFATAGDVAVFFTETMGLARPCPYHQRVRLDTYGGTVHMELCFLHDVENFLKQLNYCHLITPSRGATALERVREFMVGAVGSGLIVPPELSDPSHPCAVCFEELCVTANQGATIAAAWRTVSVTTSPSRRRCGWTPTSVRRYLPHAAGLSDADRAGALRVGPCAGPDRGGRRAAPPVAENDSVRKEADALLEAHDVFQATTPGLYAISELRFWLASGDRAGQTTMDAFASNLTALARELQQETAAVAVELALFGRRAEHFDRAFGSHLAALDMVDALIIGGQATSPDDQIEALIRACYDHHLTTPLLRRLVSPEQCDEEALRRVLARMGAGAGGPKGGAGPDDDGDRVAVEEGARGLGAPGGGGEDEAPSPRARGTGPETWGDIATQAAADVRERRRLYADRLTKRSLASLGRCVREQRGELEKMLRVSVHGEVLPATFAAVANGFAARALLAALTAGAGTVIDNRSAPGVFDAHRFMRASLLRHQVDPALLPSITHRFFELVNGPLFDHSTHSFAQPPNTALYYSVENVGLLPHLKEELARFIMGAGGSGADWAVSEFQRFYCFDGISGITPTQRAAWRYIRELIIATTLFASVYRCGELELRRPDCSRPTSEGRYRYPPGVYLTYDSDCPLVAIVESAPDGCIGPRSVVVYDRDVFSILYSVLQHLAPRLPDGGHDGPP.

Disordered stretches follow at residues 41–66 (RGNA…AGPG), 428–447 (GAGA…GDRV), and 452–483 (GARG…WGDI). A compositionally biased stretch (low complexity) spans 52–63 (ASGAGAAASSEA). Positions 429–439 (AGAGGPKGGAG) are enriched in gly residues. 691-698 (FASVYRCG) provides a ligand contact to ATP.

Belongs to the herpesviridae TRM1 protein family. As to quaternary structure, associates with TRM2 and TRM3 to form the tripartite terminase complex. Interacts with portal protein.

It localises to the host nucleus. In terms of biological role, component of the molecular motor that translocates viral genomic DNA in empty capsid during DNA packaging. Forms a tripartite terminase complex together with TRM2 and TRM3 in the host cytoplasm. Once the complex reaches the host nucleus, it interacts with the capsid portal vertex. This portal forms a ring in which genomic DNA is translocated into the capsid. TRM1 carries an endonuclease activity that plays an important role for the cleavage of concatemeric viral DNA into unit length genomes. The sequence is that of Tripartite terminase subunit 1 from Homo sapiens (Human).